A 204-amino-acid polypeptide reads, in one-letter code: Crossover junction endodeoxyribonuclease RuvC (204 aa).

Residues Asp-7, Glu-68, and Asp-141 contribute to the active site. Mg(2+)-binding residues include Asp-7, Glu-68, and Asp-141.

Belongs to the RuvC family. As to quaternary structure, homodimer which binds Holliday junction (HJ) DNA. The HJ becomes 2-fold symmetrical on binding to RuvC with unstacked arms; it has a different conformation from HJ DNA in complex with RuvA. In the full resolvosome a probable DNA-RuvA(4)-RuvB(12)-RuvC(2) complex forms which resolves the HJ. Mg(2+) is required as a cofactor.

The protein resides in the cytoplasm. The enzyme catalyses Endonucleolytic cleavage at a junction such as a reciprocal single-stranded crossover between two homologous DNA duplexes (Holliday junction).. In terms of biological role, the RuvA-RuvB-RuvC complex processes Holliday junction (HJ) DNA during genetic recombination and DNA repair. Endonuclease that resolves HJ intermediates. Cleaves cruciform DNA by making single-stranded nicks across the HJ at symmetrical positions within the homologous arms, yielding a 5'-phosphate and a 3'-hydroxyl group; requires a central core of homology in the junction. The consensus cleavage sequence is 5'-(A/T)TT(C/G)-3'. Cleavage occurs on the 3'-side of the TT dinucleotide at the point of strand exchange. HJ branch migration catalyzed by RuvA-RuvB allows RuvC to scan DNA until it finds its consensus sequence, where it cleaves and resolves the cruciform DNA. The sequence is that of Crossover junction endodeoxyribonuclease RuvC from Clavibacter sepedonicus (Clavibacter michiganensis subsp. sepedonicus).